The sequence spans 608 residues: Glutamyl-tRNA(Gln) amidotransferase subunit E (608 aa).

The tract at residues 401–428 (PEETRAANPDGTTRFLRPRPGAARMYPE) is disordered.

Belongs to the GatB/GatE family. GatE subfamily. As to quaternary structure, heterodimer of GatD and GatE.

It catalyses the reaction L-glutamyl-tRNA(Gln) + L-glutamine + ATP + H2O = L-glutaminyl-tRNA(Gln) + L-glutamate + ADP + phosphate + H(+). In terms of biological role, allows the formation of correctly charged Gln-tRNA(Gln) through the transamidation of misacylated Glu-tRNA(Gln) in organisms which lack glutaminyl-tRNA synthetase. The reaction takes place in the presence of glutamine and ATP through an activated gamma-phospho-Glu-tRNA(Gln). The GatDE system is specific for glutamate and does not act on aspartate. The chain is Glutamyl-tRNA(Gln) amidotransferase subunit E from Pyrobaculum arsenaticum (strain DSM 13514 / JCM 11321 / PZ6).